Consider the following 259-residue polypeptide: Exotoxin A regulatory protein (259 aa).

Its subcellular location is the cell inner membrane. In terms of biological role, positive regulation of toxA gene transcription. This chain is Exotoxin A regulatory protein (toxR), found in Pseudomonas aeruginosa (strain ATCC 15692 / DSM 22644 / CIP 104116 / JCM 14847 / LMG 12228 / 1C / PRS 101 / PAO1).